The following is a 239-amino-acid chain: Putative CCR4-associated factor 1 homolog 8 (239 aa).

Residues D17, E19, D133, and N204 each contribute to the a divalent metal cation site.

This sequence belongs to the CAF1 family. As to quaternary structure, component of the CCR4-NOT complex, at least composed of CRR4 and CAF1 proteins. It depends on a divalent metal cation as a cofactor.

The protein resides in the nucleus. Its subcellular location is the cytoplasm. It carries out the reaction Exonucleolytic cleavage of poly(A) to 5'-AMP.. Functionally, ubiquitous transcription factor required for a diverse set of processes. It is a component of the CCR4 complex involved in the control of gene expression. The chain is Putative CCR4-associated factor 1 homolog 8 (CAF1-8) from Arabidopsis thaliana (Mouse-ear cress).